Here is a 295-residue protein sequence, read N- to C-terminus: Probable isochorismatase (295 aa).

The disordered stretch occupies residues 1 to 21; sequence MGIPKIAGYPLPTPAEFPDNR. Positions 207–286 constitute a Carrier domain; the sequence is EIRSQKPLTL…EWWLVIEQAR (80 aa). S247 is modified (O-(pantetheine 4'-phosphoryl)serine).

Belongs to the isochorismatase family. Requires pantetheine 4'-phosphate as cofactor.

The catalysed reaction is isochorismate + H2O = (2S,3S)-2,3-dihydroxy-2,3-dihydrobenzoate + pyruvate. It participates in siderophore biosynthesis; vulnibactin biosynthesis. Its function is as follows. Involved in the biosynthesis of the catechol siderophore vulnibactin. Vulnibactin is a chelating compound involved in transporting iron from the bacterial environment into the cell cytoplasm. In Vibrio vulnificus (strain CMCP6), this protein is Probable isochorismatase (venB).